Consider the following 646-residue polypeptide: Cysteine-rich receptor-like protein kinase 37 (646 aa).

A signal peptide spans 1 to 26; the sequence is MGKSCVVTSSFSLLLLFLQTLKYVHA. Gnk2-homologous domains lie at 27-132 and 142-252; these read GFIC…NHST and TINP…LYPY. Residues 27–287 are Extracellular-facing; the sequence is GFICYGDFFN…RDEKSFQGSN (261 aa). Residues Asn-62, Asn-129, Asn-169, and Asn-180 are each glycosylated (N-linked (GlcNAc...) asparagine). A helical membrane pass occupies residues 288–308; that stretch reads IAIIVVPSVINLIIFVVLIFS. The Cytoplasmic portion of the chain corresponds to 309 to 646; it reads WKRKQSHTII…LTRPSLSLGH (338 aa). The 282-residue stretch at 345-626 folds into the Protein kinase domain; sequence FSLENKLGQG…LFWLERHATI (282 aa). ATP is bound by residues 351-359 and Lys-373; that span reads LGQGGFGSV. Tyr-418 carries the post-translational modification Phosphotyrosine. Asp-470 functions as the Proton acceptor in the catalytic mechanism. Phosphoserine is present on Ser-474. Thr-510 carries the phosphothreonine modification. Position 518 is a phosphotyrosine (Tyr-518).

The protein belongs to the protein kinase superfamily. Ser/Thr protein kinase family. CRK subfamily.

The protein localises to the membrane. The enzyme catalyses L-seryl-[protein] + ATP = O-phospho-L-seryl-[protein] + ADP + H(+). The catalysed reaction is L-threonyl-[protein] + ATP = O-phospho-L-threonyl-[protein] + ADP + H(+). This Arabidopsis thaliana (Mouse-ear cress) protein is Cysteine-rich receptor-like protein kinase 37 (CRK37).